An 839-amino-acid chain; its full sequence is Autophagy-related protein 9A (839 aa).

Residue A2 is modified to N-acetylalanine. At 2-61 (AQFDTEYQRLEASYSDSPPGEEDLLVHVAEGSKSPWHHIENLDLFFSRVYNLHQKNGFTC) the chain is on the cytoplasmic side. The Tyrosine-based sorting signal motif lies at 8–11 (YQRL). Phosphoserine is present on residues S14, S16, and S18. Residues 62-84 (MLIGEMFELMQFLFVVAFTTFLV) form a helical membrane-spanning segment. The Lumenal portion of the chain corresponds to 85–128 (SCVDYDILFANKMVNHSLHPTEPVKVTLPDAFLPAQVCSARIQE). N-linked (GlcNAc...) asparagine glycosylation occurs at N99. The chain crosses the membrane as a helical span at residues 129 to 154 (NGSLITILVIAGVFWIHRLIKFIYNI). The Cytoplasmic segment spans residues 155-290 (CCYWEIHSFY…ELAQRLSNRI (136 aa)). An intramembrane segment occupies 291–301 (LWIGIANFLLC). Over 302-319 (PLILIWQILYAFFSYAEV) the chain is Cytoplasmic. The stretch at 320-328 (LKREPGALG) is an intramembrane region. Topologically, residues 329-371 (ARCWSLYGRCYLRHFNELEHELQSRLNRGYKPASKYMNCFLSP) are cytoplasmic. Residues 372–397 (LLTLLAKNGAFFAGSILAVLIALTIY) traverse the membrane as a helical segment. Over 398 to 406 (DEDVLAVEH) the chain is Lumenal. A helical membrane pass occupies residues 407–424 (VLTTVTLLGVTVTVCRSF). Topologically, residues 425–470 (IPDQHMVFCPEQLLRVILAHIHYMPDHWQGNAHRSQTRDEFAQLFQ) are cytoplasmic. The stretch at 471 to 480 (YKAVFILEEL) is an intramembrane region. The Cytoplasmic portion of the chain corresponds to 481–483 (LSP). The stretch at 484-492 (IVTPLILIF) is an intramembrane region. The Cytoplasmic portion of the chain corresponds to 493-839 (CLRPRALEII…DELPPQVHKV (347 aa)). S656 is modified (phosphoserine). Disordered regions lie at residues 657 to 686 (PLQPGAAPQGRVPSTMTGSGVDARTASSGS) and 717 to 839 (HKQQ…VHKV). Residues 724–736 (EPERHVWHRRESD) show a composition bias toward basic and acidic residues. Residues S735, S738, S741, and S828 each carry the phosphoserine modification. Composition is skewed to acidic residues over residues 737–747 (ESGESAPEEGG) and 823–832 (VPEEGSEDEL).

Belongs to the ATG9 family. Homotrimer; forms a homotrimer with a central pore that forms a path between the two membrane leaflets. Interacts (via cytoplasmic its C-terminus) with ATG2A. Interacts with SUPT20H. Interacts (via the tyrosine-based sorting signal motif) with AP4M1; promoting association with the AP-4 complex. Interacts with ARFIP1 and ARFIP2. Interacts with ATG4A; the interaction is direct and promotes ATG9A trafficking. Post-translationally, ufmylated in a DDRGK1 dependent manner.

The protein localises to the preautophagosomal structure membrane. It localises to the cytoplasmic vesicle. It is found in the autophagosome membrane. The protein resides in the golgi apparatus. Its subcellular location is the trans-Golgi network membrane. The protein localises to the late endosome membrane. It localises to the recycling endosome membrane. It is found in the endoplasmic reticulum membrane. The protein resides in the mitochondrion membrane. It carries out the reaction a 1,2-diacyl-sn-glycero-3-phosphocholine(in) = a 1,2-diacyl-sn-glycero-3-phosphocholine(out). The catalysed reaction is a 1,2-diacyl-sn-glycero-3-phospho-L-serine(in) = a 1,2-diacyl-sn-glycero-3-phospho-L-serine(out). The enzyme catalyses a 1,2-diacyl-sn-glycero-3-phosphoethanolamine(in) = a 1,2-diacyl-sn-glycero-3-phosphoethanolamine(out). In terms of biological role, phospholipid scramblase involved in autophagy by mediating autophagosomal membrane expansion. Cycles between the preautophagosomal structure/phagophore assembly site (PAS) and the cytoplasmic vesicle pool and supplies membrane for the growing autophagosome. Lipid scramblase activity plays a key role in preautophagosomal structure/phagophore assembly by distributing the phospholipids that arrive through ATG2 (ATG2A or ATG2B) from the cytoplasmic to the luminal leaflet of the bilayer, thereby driving autophagosomal membrane expansion. Also required to supply phosphatidylinositol 4-phosphate to the autophagosome initiation site by recruiting the phosphatidylinositol 4-kinase beta (PI4KB) in a process dependent on ARFIP2, but not ARFIP1. In addition to autophagy, also plays a role in necrotic cell death. The polypeptide is Autophagy-related protein 9A (Mus musculus (Mouse)).